Consider the following 831-residue polypeptide: Heat shock 70 kDa protein 14 (831 aa).

Disordered regions lie at residues 503 to 579 (EEVE…KKKV) and 786 to 831 (TKPK…EGST). A compositionally biased stretch (basic and acidic residues) spans 509 to 526 (VTKEHSEETTKMDSDKAS). Serine 533 carries the phosphoserine modification.

The protein belongs to the heat shock protein 70 (TC 1.A.33) family. HSP110/SSE subfamily. In terms of assembly, interacts with HTT1 in both cytoplasm and nucleus. In terms of tissue distribution, constitutively expressed.

Its subcellular location is the cytoplasm. It localises to the nucleus. Functionally, in cooperation with other chaperones, Hsp70s are key components that facilitate folding of de novo synthesized proteins, assist translocation of precursor proteins into organelles, and are responsible for degradation of damaged protein under stress conditions. The protein is Heat shock 70 kDa protein 14 (HSP70-14) of Arabidopsis thaliana (Mouse-ear cress).